The following is a 1178-amino-acid chain: Zinc finger CCHC domain-containing protein 2 (1178 aa).

4 disordered regions span residues M1–A90, A207–G249, V557–Q683, and L936–T986. Residues P43–L67 are compositionally biased toward pro residues. Residues A75–P88 show a composition bias toward gly residues. Residues A208–D219 show a composition bias toward basic and acidic residues. Residues E220–Q229 show a composition bias toward acidic residues. The residue at position 236 (S236) is a Phosphoserine. Positions P580 to L594 are enriched in basic and acidic residues. Residues N595–Q607 are compositionally biased toward polar residues. A compositionally biased stretch (low complexity) spans S632 to S641. Positions P642–D661 are enriched in basic and acidic residues. A compositionally biased stretch (polar residues) spans E665 to Q683. Over residues S937–A948 the composition is skewed to low complexity. The segment covering P959–S973 has biased composition (pro residues). Polar residues predominate over residues P974 to T986. Residues V1131 to Q1148 form a CCHC-type zinc finger.

The protein is Zinc finger CCHC domain-containing protein 2 of Homo sapiens (Human).